Reading from the N-terminus, the 365-residue chain is Protein dbl-1 (365 aa).

An N-terminal signal peptide occupies residues Met-1–Ala-42. Positions Asp-43–Glu-244 are excised as a propeptide. N-linked (GlcNAc...) asparagine glycosylation is found at Asn-110, Asn-143, and Asn-167. The tract at residues Ser-231–Ala-259 is disordered. The span at Lys-246–His-255 shows a compositional bias: basic residues. Intrachain disulfides connect Cys-264-Cys-330, Cys-293-Cys-362, and Cys-297-Cys-364. Asn-306 carries an N-linked (GlcNAc...) asparagine glycan.

Belongs to the TGF-beta family. Homodimer; disulfide-linked. Interacts with drag-1. In terms of tissue distribution, expressed in embryos just prior to hatching and remains constant in most cells throughout the larval and adult stages. Expressed by AVA command interneurons.

Its subcellular location is the secreted. Functionally, ligand for the serine/threonine-protein kinase receptor type-1 sma-6 which activates a TGF-beta-like signaling pathway. Multifunctional protein that is involved in body size, male ectodermal patterning, innate immunity, lipid metabolism and neural plasticity. Dose-dependent regulator of body size, probably influencing the sizes of some or all cells rather than their number. Plays a role in patterning of male-specific genital sensilla (simple sense organs), known as rays, and mating-associated structures, spicules. Plays a protective role in response to infection by the Gram-negative bacterium S.marcescens, by activating expression of genes involved in innate immunity. Regulator of lipid homeostasis, acting non cell-autonomously in the hypodermis; partly dependent on the Insulin/IGF-1-like signaling (IIS) mediated pathway. Required for aversive olfactory learning of pathogenic bacteria in adults. Involved in gland cell morphology, possibly via activation of a Smad-independent TGF-beta signaling pathway. Required to oppose the autoregulation of expression of Runt-related transcription factor rnt-1. The polypeptide is Protein dbl-1 (Caenorhabditis elegans).